A 1288-amino-acid polypeptide reads, in one-letter code: Structural maintenance of chromosomes protein 4 (1288 aa).

The span at 1 to 10 shows a compositional bias: polar residues; sequence MPRKGTQPST. Residues 1–55 form a disordered region; sequence MPRKGTQPSTARRREEGPPPPSPDGASSDAEPEPPSGRTESPATAAETASEELDN. Phosphoserine is present on residues Ser-22 and Ser-28. Thr-39 is subject to Phosphothreonine. Residues 39–48 are compositionally biased toward low complexity; the sequence is TESPATAAET. 2 positions are modified to phosphoserine: Ser-41 and Ser-50. 113 to 120 contacts ATP; the sequence is GPNGSGKS. Ser-143 is subject to Phosphoserine. The stretch at 272–588 forms a coiled coil; that stretch reads RRVEILNEHR…LFQKVEEAKS (317 aa). Residues Lys-381 and Lys-679 each carry the N6-acetyllysine modification. In terms of domain architecture, SMC hinge spans 613–727; the sequence is PGIYGRLGDL…ADNLDQATRV (115 aa). Residues 767–1020 are a coiled coil; sequence LVIEISEEEV…ALSIKLKLEQ (254 aa). Phosphoserine occurs at positions 982 and 1056. Residues 1109-1129 adopt a coiled-coil conformation; that stretch reads ELDKITYERDSFRQAYEDLRK.

This sequence belongs to the SMC family. SMC4 subfamily. As to quaternary structure, forms a heterodimer with SMC2. Component of the condensin complex, which contains the SMC2 and SMC4 heterodimer, and three non SMC subunits that probably regulate the complex: BRRN1/CAPH, CNAP1/CAPD2 and CAPG. As to expression, widely expressed. Higher expression in testis, colon, thymus.

Its subcellular location is the nucleus. It is found in the cytoplasm. The protein resides in the chromosome. Functionally, central component of the condensin complex, a complex required for conversion of interphase chromatin into mitotic-like condense chromosomes. The condensin complex probably introduces positive supercoils into relaxed DNA in the presence of type I topoisomerases and converts nicked DNA into positive knotted forms in the presence of type II topoisomerases. This chain is Structural maintenance of chromosomes protein 4 (SMC4), found in Homo sapiens (Human).